The primary structure comprises 625 residues: MKYLAGDFDVVVIGAGHAGCEAALASARMGCKTLICTMNLDSIALMACNPNIGGTAKGHLVREIDALGGEMGINIDHTFIQSRMLNTSKGPAVHSLRAQADKKRYSERMKHLLEKEENVVLRQLEVIEIDVEDNEVKGVLTKNGAYFTTKAIILCTGTYLKGKIIIGDIIYSSGPSGLYPANDLSQSLLDLGINLRRFKTGTPARINKRSVDFSKMVEQPGDEKIVPFSFIHDKLDKDQISCYLTYTSEETHKIIHENIHRSPLYNGSIEGIGPRYCPSIEDKIVRFPDKDKHQIFIEPEGENTEELYVGGMSSSLPEDVQIKMYRSVPGLENAEILRTAYAIEYDCIDPQQLDLTLEFKNINGLYGAGQFNGSSGYEEAAAQGLVAGINAVLKIKGKDPLILKRSDAYIGVLIDDLVTKGTNEPYRMMTSRAEYRLLLRQDNADLRLTEMGYRIGLVKEDRYNKYLNRKKNVENEIERIKKVQITGKKEINEFLLEKGSTELKKPISLYELIKRPELDYFKVEPLDDKRPNLSDDEKEEINIIAKYEGYINKQLEQVEQFKKYENRLIPKSINYSDIKGLRIEAIQKLEKIKPINIGQASRISGVSPADISVLLIYMERKNREN.

14 to 19 is an FAD binding site; the sequence is GAGHAG. NAD(+) is bound at residue 273–287; that stretch reads GPRYCPSIEDKIVRF.

The protein belongs to the MnmG family. As to quaternary structure, homodimer. Heterotetramer of two MnmE and two MnmG subunits. FAD is required as a cofactor.

It localises to the cytoplasm. In terms of biological role, NAD-binding protein involved in the addition of a carboxymethylaminomethyl (cmnm) group at the wobble position (U34) of certain tRNAs, forming tRNA-cmnm(5)s(2)U34. The polypeptide is tRNA uridine 5-carboxymethylaminomethyl modification enzyme MnmG (Clostridium botulinum (strain Loch Maree / Type A3)).